A 269-amino-acid chain; its full sequence is Shikimate dehydrogenase (NADP(+)) (269 aa).

Residues 17–19 and T64 each bind shikimate; that span reads SKS. K68 serves as the catalytic Proton acceptor. E80 contributes to the NADP(+) binding site. N89 and D105 together coordinate shikimate. Residues 130-134, 154-159, and M213 each bind NADP(+); these read GAGGA and NRTHAK. Y215 is a shikimate binding site. G237 is an NADP(+) binding site.

It belongs to the shikimate dehydrogenase family. As to quaternary structure, homodimer.

The catalysed reaction is shikimate + NADP(+) = 3-dehydroshikimate + NADPH + H(+). The protein operates within metabolic intermediate biosynthesis; chorismate biosynthesis; chorismate from D-erythrose 4-phosphate and phosphoenolpyruvate: step 4/7. Involved in the biosynthesis of the chorismate, which leads to the biosynthesis of aromatic amino acids. Catalyzes the reversible NADPH linked reduction of 3-dehydroshikimate (DHSA) to yield shikimate (SA). This Neisseria pharyngis protein is Shikimate dehydrogenase (NADP(+)).